A 436-amino-acid polypeptide reads, in one-letter code: UPF0229 protein mll9637 (436 aa).

The tract at residues Ile54–Gly103 is disordered.

Belongs to the UPF0229 family.

The polypeptide is UPF0229 protein mll9637 (Mesorhizobium japonicum (strain LMG 29417 / CECT 9101 / MAFF 303099) (Mesorhizobium loti (strain MAFF 303099))).